The following is a 278-amino-acid chain: MAVAYADKPNHFINFPLTHFQGFVLNYKGLQFQILDEGVDCKIQTAPHISLTMLDIQPEDYKSVDVAIQEVIDDMHWGDGFQIKFENPHILGRCIVLDVKGVEELHDDLVNYIRDKGCVADQSRKWIGHCTIAQLTDAALSIKENVDFINSMQFNYKITINPSSPARLEIVKLGAEKKDGFYETIVSHWMGIRFEYTSPTDKLAMIMGYCCLDVVRKELEEGDLPENDDDAWFKLSYHYENNSWFFRHVYRKSFHFRKACQNLDCNCLGFYESPVEED.

The protein belongs to the coronaviruses ns2a protein family.

It is found in the host cytoplasm. The polypeptide is Non-structural protein 2a (Homo sapiens (Human)).